The chain runs to 471 residues: L-lysine 2,3-aminomutase (471 aa).

Positions His120 to Ala332 constitute a Radical SAM core domain. Cys134, Cys138, and Cys141 together coordinate [4Fe-4S] cluster. Lys346 carries the N6-(pyridoxal phosphate)lysine modification.

Belongs to the radical SAM superfamily. KamA family. In terms of assembly, homotetramer. The cofactor is [4Fe-4S] cluster. Pyridoxal 5'-phosphate is required as a cofactor.

The enzyme catalyses L-lysine = (3S)-3,6-diaminohexanoate. The protein operates within amino-acid degradation; L-lysine degradation via acetate pathway. Catalyzes the interconversion of L-alpha-lysine and L-beta-lysine. This Bacillus subtilis (strain 168) protein is L-lysine 2,3-aminomutase (kamA).